The following is a 691-amino-acid chain: Amino-acid acetyltransferase, mitochondrial (691 aa).

The segment covering 1–27 has biased composition (polar residues); that stretch reads MSSTSLAWPRTAKSSLLQSADFSSTSK. Disordered regions lie at residues 1–29 and 65–95; these read MSST…SKGY and RLKA…PSGV. Basic and acidic residues predominate over residues 75 to 87; the sequence is QVKEPEKESKDDA. The region spanning 512-681 is the N-acetyltransferase domain; it reads NRPRMSLDDP…YEAVCRSIQP (170 aa).

This sequence belongs to the acetyltransferase family.

It is found in the mitochondrion. The enzyme catalyses L-glutamate + acetyl-CoA = N-acetyl-L-glutamate + CoA + H(+). The protein operates within amino-acid biosynthesis; L-arginine biosynthesis; N(2)-acetyl-L-ornithine from L-glutamate: step 1/4. Its function is as follows. N-acetylglutamate synthase involved in arginine biosynthesis. In Aspergillus terreus (strain NIH 2624 / FGSC A1156), this protein is Amino-acid acetyltransferase, mitochondrial (arg2).